Here is a 307-residue protein sequence, read N- to C-terminus: Myeloid-associated differentiation marker-like protein 2 (307 aa).

MARVEL domains lie at 17 to 154 (AVTS…ARPG) and 159 to 303 (YMAT…RIRF). Helical transmembrane passes span 53–73 (FCMA…ACEF), 90–110 (AFAM…PLYF), 129–149 (LAAS…VALT), 163–183 (VSGL…GALV), 198–218 (VAVY…SVMG), 229–249 (RLVV…AVIW), and 278–298 (LVVA…LAYS).

This sequence belongs to the MAL family.

The protein localises to the membrane. This is Myeloid-associated differentiation marker-like protein 2 (MYADML2) from Homo sapiens (Human).